A 249-amino-acid chain; its full sequence is Eukaryotic translation initiation factor 3 subunit K (249 aa).

One can recognise a PCI domain in the interval 46–222 (FDCYANLALL…VKVPTNKENE (177 aa)).

This sequence belongs to the eIF-3 subunit K family. As to quaternary structure, component of the eukaryotic translation initiation factor 3 (eIF-3) complex.

Its subcellular location is the cytoplasm. Functionally, component of the eukaryotic translation initiation factor 3 (eIF-3) complex, which is involved in protein synthesis of a specialized repertoire of mRNAs and, together with other initiation factors, stimulates binding of mRNA and methionyl-tRNAi to the 40S ribosome. The eIF-3 complex specifically targets and initiates translation of a subset of mRNAs involved in cell proliferation. The polypeptide is Eukaryotic translation initiation factor 3 subunit K (Neosartorya fischeri (strain ATCC 1020 / DSM 3700 / CBS 544.65 / FGSC A1164 / JCM 1740 / NRRL 181 / WB 181) (Aspergillus fischerianus)).